The chain runs to 312 residues: Pantothenate kinase (312 aa).

97–104 (GSVAVGKS) provides a ligand contact to ATP.

Belongs to the prokaryotic pantothenate kinase family.

The protein resides in the cytoplasm. It carries out the reaction (R)-pantothenate + ATP = (R)-4'-phosphopantothenate + ADP + H(+). Its pathway is cofactor biosynthesis; coenzyme A biosynthesis; CoA from (R)-pantothenate: step 1/5. The polypeptide is Pantothenate kinase (Mycobacterium bovis (strain BCG / Pasteur 1173P2)).